An 862-amino-acid chain; its full sequence is MARQGCFGSYQVISLFTFAIGVNLCLGFTASRIKRAEWDEGPPTVLSDSPWTNTSGSCKGRCFELQEVGPPDCRCDNLCKSYSSCCHDFDELCLKTARGWECTKDRCGEVRNEENACHCSEDCLSRGDCCTNYQVVCKGESHWVDDDCEEIRVPECPAGFVRPPLIIFSVDGFRASYMKKGSKVMPNIEKLRSCGTHAPYMRPVYPTKTFPNLYTLATGLYPESHGIVGNSMYDPVFDATFHLRGREKFNHRWWGGQPLWITATKQGVRAGTFFWSVSIPHERRILTILQWLSLPDNERPSVYAFYSEQPDFSGHKYGPFGPEMTNPLREIDKTVGQLMDGLKQLKLHRCVNVIFVGDHGMEDVTCDRTEFLSNYLTNVDDITLVPGTLGRIRPKIPNNLKYDPKAIIANLTCKKPDQHFKPYMKQHLPKRLHYANNRRIEDLHLLVERRWHVARKPLDVYKKPSGKCFFQGDHGFDNKVNSMQTVFVGYGPTFKYRTKVPPFENIELYNVMCDLLGLKPAPNNGTHGSLNHLLRTNTFRPTLPEEVSRPNYPGIMYLQSDFDLGCTCDDKVEPKNKLEELNKRLHTKGSTEERHLLYGRPAVLYRTSYDILYHTDFESGYSEIFLMPLWTSYTISKQAEVSSIPEHLTNCVRPDVRVSPGFSQNCLAYKNDKQMSYGFLFPPYLSSSPEAKYDAFLVTNMVPMYPAFKRVWTYFQRVLVKKYASERNGVNVISGPIFDYNYNGLRDIEDEIKQYVEGSSIPVPTHYYSIITSCLDFTQPADKCDGPLSVSSFILPHRPDNDESCNSSEDESKWVEELMKMHTARVRDIEHLTGLDFYRKTSRSYSEILTLKTYLHTYESEI.

The first 27 residues, 1-27, serve as a signal peptide directing secretion; the sequence is MARQGCFGSYQVISLFTFAIGVNLCLG. Residues 28-35 constitute a propeptide, removed by furin; that stretch reads FTASRIKR. The N-linked (GlcNAc...) asparagine glycan is linked to N53. 2 consecutive SMB domains span residues 54 to 97 and 98 to 142; these read TSGS…LKTA and RGWE…GESH. 10 disulfides stabilise this stretch: C58/C75, C62/C93, C73/C86, C79/C85, C102/C119, C107/C137, C117/C130, C123/C129, C148/C194, and C156/C350. The short motif at 126–128 is the Cell attachment site element; that stretch reads RGD. The segment at 144-501 is phosphodiesterase domain; it reads VDDDCEEIRV…PTFKYRTKVP (358 aa). D171 and T209 together coordinate Zn(2+). T209 acts as the Nucleophile in catalysis. 3 residues coordinate 1-(9Z-octadecenoyl)-sn-glycero-3-phosphate: T209, N230, and D311. 1-hexadecanoyl-sn-glycero-3-phosphate contacts are provided by T209, N230, and D311. The 1-tetradecanoyl-sn-glycerol 3-phosphate site is built by T209, N230, and D311. Zn(2+) is bound by residues D311, H315, D358, and H359. Disulfide bonds link C366-C468, C413-C805, C566-C666, C568-C651, and C774-C784. Residue N410 is glycosylated (N-linked (GlcNAc...) asparagine). Zn(2+) is bound at residue H474. A 1-(9Z-octadecenoyl)-sn-glycero-3-phosphate-binding site is contributed by H474. H474 lines the 1-hexadecanoyl-sn-glycero-3-phosphate pocket. H474 serves as a coordination point for 1-tetradecanoyl-sn-glycerol 3-phosphate. The N-linked (GlcNAc...) asparagine glycan is linked to N524. Positions 597 to 862 are nuclease-like domain; the sequence is LYGRPAVLYR…TYLHTYESEI (266 aa). 5 residues coordinate Ca(2+): D739, N741, N743, L745, and D747. The N-linked (GlcNAc...) asparagine glycan is linked to N806. The required for secretion stretch occupies residues 829–850; sequence IEHLTGLDFYRKTSRSYSEILT.

The protein belongs to the nucleotide pyrophosphatase/phosphodiesterase family. It depends on Zn(2+) as a cofactor. Requires Ca(2+) as cofactor. N-glycosylation, but not furin-cleavage, plays a critical role on secretion and on lysoPLD activity. Secretion requires simultaneous glycosylation on Asn-53 and Asn-410, while probable glycosylation of Asn-410 has a preferential role on lysoPLD activity. Not O-glycosylated. In terms of processing, the interdomain disulfide bond between Cys-413 and Cys-805 is essential for catalytic activity. As to expression, expressed in brain and adipose tissue.

It localises to the secreted. It carries out the reaction a 1-O-alkyl-sn-glycero-3-phosphoethanolamine + H2O = a 1-O-alkyl-sn-glycero-3-phosphate + ethanolamine + H(+). The catalysed reaction is a 1-acyl-sn-glycero-3-phosphoethanolamine + H2O = a 1-acyl-sn-glycero-3-phosphate + ethanolamine + H(+). It catalyses the reaction 1-(9Z-octadecenoyl)-sn-glycero-3-phosphoethanolamine + H2O = 1-(9Z-octadecenoyl)-sn-glycero-3-phosphate + ethanolamine + H(+). The enzyme catalyses a 1-O-alkyl-sn-glycero-3-phosphocholine + H2O = a 1-O-alkyl-sn-glycero-3-phosphate + choline + H(+). It carries out the reaction 1-O-(9Z-octadecenyl)-sn-glycero-3-phosphocholine + H2O = 1-O-(9Z-octadecenyl)-sn-glycero-3-phosphate + choline + H(+). The catalysed reaction is 1-O-hexadecyl-sn-glycero-3-phosphocholine + H2O = 1-O-hexadecyl-sn-glycero-3-phosphate + choline + H(+). It catalyses the reaction a 1-O-(1Z-alkenyl)-sn-glycero-3-phosphocholine + H2O = a 1-O-(1Z-alkenyl)-sn-glycero-3-phosphate + choline + H(+). The enzyme catalyses a 1-acyl-sn-glycero-3-phosphocholine + H2O = a 1-acyl-sn-glycero-3-phosphate + choline + H(+). It carries out the reaction 1-dodecanoyl-sn-glycero-3-phosphocholine + H2O = 1-dodecanoyl-sn-glycerol 3-phosphate + choline + H(+). The catalysed reaction is 1-(9Z-octadecenoyl)-sn-glycero-3-phosphocholine + H2O = 1-(9Z-octadecenoyl)-sn-glycero-3-phosphate + choline + H(+). It catalyses the reaction 1-tetradecanoyl-sn-glycero-3-phosphocholine + H2O = 1-tetradecanoyl-sn-glycerol 3-phosphate + choline + H(+). The enzyme catalyses 1-decanoyl-sn-glycero-3-phosphocholine + H2O = 1-decanoyl-sn-glycero-3-phosphate + choline + H(+). It carries out the reaction 1-octadecanoyl-sn-glycero-3-phosphocholine + H2O = 1-octadecanoyl-sn-glycero-3-phosphate + choline + H(+). The catalysed reaction is 1-hexadecanoyl-sn-glycero-3-phosphocholine + H2O = 1-hexadecanoyl-sn-glycero-3-phosphate + choline + H(+). It catalyses the reaction 1-hexanoyl-sn-glycero-3-phosphocholine + H2O = 1-hexanoyl-sn-glycero-3-phosphate + choline + H(+). The enzyme catalyses 1-(9Z,12Z)-octadecadienoyl-sn-glycero-3-phosphocholine + H2O = 1-(9Z,12Z)-octadecadienoyl-sn-glycero-3-phosphate + choline + H(+). It carries out the reaction sphing-4-enine-phosphocholine + H2O = sphing-4-enine 1-phosphate + choline + H(+). The catalysed reaction is 1-(5Z,8Z,11Z,14Z-eicosatetraenoyl)-sn-glycero-3-phosphocholine + H2O = 1-(5Z,8Z,11Z,14Z-eicosatetraenoyl)-sn-glycero-3-phosphate + choline + H(+). It catalyses the reaction a 2-acyl-sn-glycero-3-phosphocholine + H2O = a 2-acyl-sn-glycerol 3-phosphate + choline + H(+). The enzyme catalyses a 1,2-diacyl-sn-glycero-3-phosphocholine + H2O = a 1,2-diacyl-sn-glycero-3-phosphate + choline + H(+). It carries out the reaction 1,2-dioctanoyl-sn-glycero-3-phosphocholine + H2O = 1,2-dioctanoyl-sn-glycero-3-phosphate + choline + H(+). The catalysed reaction is 1,2-didecanoyl-sn-glycero-3-phosphocholine + H2O = 1,2-didecanoyl-sn-glycero-3-phosphate + choline + H(+). It catalyses the reaction a 1-acyl-sn-glycero-3-phospho-L-serine + H2O = a 1-acyl-sn-glycero-3-phosphate + L-serine + H(+). The enzyme catalyses 1-(9Z-octadecenoyl)-sn-glycero-3-phospho-L-serine + H2O = 1-(9Z-octadecenoyl)-sn-glycero-3-phosphate + L-serine + H(+). It carries out the reaction a 2-acyl-sn-glycero-3-phospho-L-serine + H2O = a 2-acyl-sn-glycerol 3-phosphate + L-serine + H(+). With respect to regulation, inhibited by EDTA and EGTA. Its function is as follows. Secreted lysophospholipase D that hydrolyzes lysophospholipids to produce the signaling molecule lysophosphatidic acid (LPA) in extracellular fluids. Its major substrate is lysophosphatidylcholine. Can also act on sphingosylphosphorylcholine producing sphingosine-1-phosphate, a modulator of cell motility. Can hydrolyze, in vitro, bis-pNPP, to some extent pNP-TMP, and barely ATP. Involved in several motility-related processes such as angiogenesis and neurite outgrowth. Acts as an angiogenic factor by stimulating migration of smooth muscle cells and microtubule formation. Stimulates migration of melanoma cells, probably via a pertussis toxin-sensitive G protein. May have a role in induction of parturition. Possible involvement in cell proliferation and adipose tissue development. Required for LPA production in activated platelets, cleaves the sn-1 lysophospholipids to generate sn-1 lysophosphatidic acids containing predominantly 18:2 and 20:4 fatty acids. Shows a preference for the sn-1 to the sn-2 isomer of 1-O-alkyl-sn-glycero-3-phosphocholine (lyso-PAF). The chain is Autotaxin from Mus musculus (Mouse).